The following is a 260-amino-acid chain: Adenosylcobinamide-GDP ribazoletransferase (260 aa).

Helical transmembrane passes span A3 to W23, F36 to I56, W60 to L80, V108 to L128, L133 to M153, A180 to V200, M206 to L226, and G239 to A259.

It belongs to the CobS family. Mg(2+) serves as cofactor.

Its subcellular location is the cell inner membrane. It catalyses the reaction alpha-ribazole + adenosylcob(III)inamide-GDP = adenosylcob(III)alamin + GMP + H(+). The enzyme catalyses alpha-ribazole 5'-phosphate + adenosylcob(III)inamide-GDP = adenosylcob(III)alamin 5'-phosphate + GMP + H(+). It functions in the pathway cofactor biosynthesis; adenosylcobalamin biosynthesis; adenosylcobalamin from cob(II)yrinate a,c-diamide: step 7/7. Functionally, joins adenosylcobinamide-GDP and alpha-ribazole to generate adenosylcobalamin (Ado-cobalamin). Also synthesizes adenosylcobalamin 5'-phosphate from adenosylcobinamide-GDP and alpha-ribazole 5'-phosphate. This chain is Adenosylcobinamide-GDP ribazoletransferase, found in Prochlorococcus marinus (strain MIT 9303).